The chain runs to 3391 residues: MNDQRKKAKNTPFNMLKRERNRVSTVQQLTKRFSLGMLQGRGPLKLYMALVAFLRFLTIPPTAGILKRWGTIKKSKAINVLRGFRKEIGRMLNILNRRRRSAGMIIMLIPTVMAFHLTTRNGEPHMIVSRQEKGKSLLFKTEDGVNMCTLMAMDLGELCEDTITYKCPLLRQNEPEDIDCWCNSTSTWVTYGTCTTMGEHRRQKRSVALVPHVGMGLETRTETWMSSEGAWKHVQRIETWILRHPGFTMMAAILAYTIGTTHFQRALIFILLTAVTPSMTMRCIGMSNRDFVEGVSGGSWVDIVLEHGSCVTTMAKNKPTLDFELIKTEAKQPATLRKYCIEAKLTNTTTESRCPTQGEPSLNEEQDKRFVCKHSMVDRGWGNGCGLFGKGGIVTCAMFRCKKNMEGKVVQPENLEYTIVITPHSGEEHAVGNDTGKHGKEIKITPQSSTTEAELTGYGTVTMECSPRTGLDFNEMVLLQMENKAWLVHRQWFLDLPLPWLPGADTQGSNWIQKETLVTFKNPHAKKQDVVVLGSQEGAMHTALTGATEIQMSSGNLLFTGHLKCRLRMDKLQLKGMSYSMCTGKFKVVKEIAETQHGTIVIRVQYEGDGSPCKIPFEIMDLEKRHVLGRLITVNPIVTEKDSPVNIEAEPPFGDSYIIIGVEPGQLKLNWFKKGSSIGQMFETTMRGAKRMAILGDTAWDFGSLGGVFTSIGKALHQVFGAIYGAAFSGVSWTMKILIGVIITWIGMNSRSTSLSVTLVLVGIVTLYLGVMVQADSGCVVSWKNKELKCGSGIFITDNVHTWTEQYKFQPESPSKLASAIQKAHEEGICGIRSVTRLENLMWKQITPELNHILSENEVKLTIMTGDIKGIMQAGKRSLRPQPTELKYSWKTWGKAKMLSTESHNQTFLIDGPETAECPNTNRAWNSLEVEDYGFGVFTTNIWLKLKEKQDVFCDSKLMSAAIKDNRAVHADMGYWIESALNDTWKIEKASFIEVKNCHWPKSHTLWSNGVLESEMIIPKNLAGPVSQHNYRPGYHTQITGPWHLGKLEMDFDFCDGTTVVVTEDCGNRGPSLRTTTASGKLITEWCCRSCTLPPLRYRGEDGCWYGMEIRPLKEKEENLVNSLVTAGHGQVDNFSLGVLGMALFLEEMLRTRVGTKHAILLVAVSFVTLIIGNMSFRDLGRVMVMVGATMTDDIGMGVTYLALLAAFKVRPTFAAGLLLRKLTSKALMMTTIGIVLSSQSTTPETILELTDALALGMMVLKMVRNMEKYQLAVTIMAILCVPNAVILQNAWKVSCTILAVVSVSPLFLTSSQQKTDWIPLALTIKGLNPTAIFLTTLSRTSKKRSWPLNEAIMAVGMVSILASSLLKNDIPMTGPLVAGGPLTVCYVLTGRSADLELERAADVKWEDQAEISGSSPILSITISEDGSMSIKNEEEEQTLTILIRTGLLVISGLFPVSIPITAAAWYLWEVKKQRAGVLWDVPSPPPMGKAELEDGAYRIKQKGILGYSQIGAGVYKEGTFHTMWHVTRGAVLMHKGKRIEPSWADVKKDLISYGGGWKLEGEWKEGEEVQVLALEPGKNPRAVQTKPGLFKTNAGTIGAVSLDFSPGTSGSPIIDKKGKVVGLYGNGVVTRSGAYVSAIAQTEKSIEDNPEIEDDIFRKRRLTIMDLHPGAGKTKRYLPAIVREAIKRGLRTLILAPTRVVAAEMEEALRGLPIRYQTPAIRAEHTGREIVDLMCHATFTMRLLSPVRVPNYNLIIMDEAHFTDPASIAARGYISTRVEMGEAAGIFMTATPPGSRDPFPQSNAPIIDEEREIPERSWNSGHEWVTDFKGKTVWFVPSIKAGNDIAACLSKNGKKVIQLSRKTFDSEYAKTRTNDWDFVVTTDISEMGANFKAERVIDPRRCMKPVILTDGEERVILAGPMPVTHSSAAQRRGRIGRNPKNENDQYIYMGEPLENDEDCAHWKEAKMLLDNINTPEGIIPSMFEPEREKVDAIDGEYRLRGEARTTFVDLMRRGDLPVWLAYRVAAEGINYADRRWCFDGVKNNQILEENVEVEIWTKEGERKKLKPRWLDARIYSDPLALKEFKEFAAGRKSLTLNLITEMGRLPTFMTQKARDALDNLAVLHTAEAGGRAYNHALSELPETLETLLLLTLLATVTGGILLFLMSGRGIGKMTLGMCCIITASILLWYAQIQPHWIAASIILEFFLIVLLIPEPEKQRTPQDNQLTYVVIAILTVVAATMANEMGFLEKTKKDLGLGSIATQQPESNILDIDLRPASAWTLYAVATTFVTPMLRHSIENSSVNVSLTAIANQATVLMGLGKGWPLSKMDIGVPLLAIGCYSQVNPTTLTAALFLLVAHYAIIGPALQAKASREAQKRAAAGIMKNPTVDGITVIDLDPIPYDPKFEKQLGQVMLLVLCVTQVLMMRTTWALCEVLTLATGPISTLWEGNPGRFWNTTIAVSMANIFRGSYLAGAGLLFSIMKNTTNARRGTGNIGETLGEKWKSRLNALGKSEFQIYKKSGIQEVDRTLAKEGIKRGETDHHAVSRGSAKLRWFVERNMVTPEGKVVDLGCGRGGWSYYCGGLKNVREVKGLTKGGPGHEEPIPMSTYGWNLVRLQSGVDVFFIPPEKCDTLLCDIGESSPNPTVEAGRTLRVLNLVENWLNNNTQFCIKVLNPYMPSVIEKMEALQRKYGGALVRNPLSRNSTHEMYWVSNASGNIVSSVNMISRMLINRFTMRYKKATYEPDVDLGSGTRNIGIESEIPNLDIIGKRIEKIKQEHETSWHYDQDHPYKTWAYHGSYETKQTGSASSMVNGVFRLLTKPWDVVPMVTQMAMTDTTPFGQQRVFKEKVDTRTQEPKEGTKKLMKITAEWLWKELGKKKTPRMCTREEFTRKVRSNAALGAIFTDENKWKSAREAVEDSRFWELVDKERNLHLEGKCETCVYNIMGKREKKLGEFGKAKGSRAIWYMWLGARFLEFEALGFLNEDHWFSRENSLSGVEGEGLHKLGYILRDVSKKEGGAMYADDTAGWDTRITLEDLKNEAMVTNHMEGEHKKLAEAIFKLTYQNKVVRVQRPTPRGTVMDIISRRDQRGSGQVGTYGLNTFTNMEAQLIRQMEGEGVFKSIQHLTITEEIAVQNWLARVGRERLSRMAISGDDCVVKPLDDRLPSALTALNDTGKIRKDIQQWEPSRGWNDWTQVPFCSHHFHELIMKDGRVLVVPCRNQDELIGRARISQGAGWSLRETACLGKSYDQMWSLMYFHRRDLRLAANAICSAVPSHWVPTSRTTWSIHAKHEWMTTEDMLTVWNRVWIQENPWMEDKTPVESWEEIPYLGKREDQWCGSLIGLTSRATWAKNIQAAINQVRSLIGNEEYTDYMPSMKRFRREEEEAGVLW.

Residues 1–15 form an interaction with host EXOC1 region; the sequence is MNDQRKKAKNTPFNM. At 1–101 the chain is on the cytoplasmic side; the sequence is MNDQRKKAKN…LNILNRRRRS (101 aa). Residues 37-72 are hydrophobic; homodimerization of capsid protein C; the sequence is MLQGRGPLKLYMALVAFLRFLTIPPTAGILKRWGTI. The propeptide at 101-114 is ER anchor for the capsid protein C, removed in mature form by serine protease NS3; the sequence is SAGMIIMLIPTVMA. Residues 102-119 traverse the membrane as a helical segment; sequence AGMIIMLIPTVMAFHLTT. Residues 120 to 242 are Extracellular-facing; it reads RNGEPHMIVS…HVQRIETWIL (123 aa). A glycan (N-linked (GlcNAc...) asparagine; by host) is linked at N183. Residues 243 to 260 traverse the membrane as a helical segment; it reads RHPGFTMMAAILAYTIGT. Position 261 (T261) is a topological domain, cytoplasmic. A helical transmembrane segment spans residues 262 to 280; it reads HFQRALIFILLTAVTPSMT. Residues 281-725 are Extracellular-facing; the sequence is MRCIGMSNRD…LHQVFGAIYG (445 aa). 4 disulfide bridges follow: C283-C310, C340-C401, C354-C385, and C372-C396. N347 carries N-linked (GlcNAc...) asparagine; by host glycosylation. The tract at residues 378–391 is fusion peptide; that stretch reads DRGWGNGCGLFGKG. The N-linked (GlcNAc...) asparagine; by host glycan is linked to N433. 2 cysteine pairs are disulfide-bonded: C465–C565 and C582–C613. Residues 726-746 form a helical membrane-spanning segment; sequence AAFSGVSWTMKILIGVIITWI. Residues 747–752 are Cytoplasmic-facing; the sequence is GMNSRS. A helical transmembrane segment spans residues 753 to 773; it reads TSLSVTLVLVGIVTLYLGVMV. At 774 to 1195 the chain is on the extracellular side; that stretch reads QADSGCVVSW…MVGATMTDDI (422 aa). Disulfide bonds link C779–C790, C830–C918, C954–C998, C1055–C1104, C1066–C1088, and C1087–C1091. N-linked (GlcNAc...) asparagine; by host glycans are attached at residues N905 and N982. N-linked (GlcNAc...) asparagine; by host glycosylation is found at N1134 and N1174. Residues 1196–1220 form a helical membrane-spanning segment; the sequence is GMGVTYLALLAAFKVRPTFAAGLLL. Residues 1221 to 1226 are Cytoplasmic-facing; the sequence is RKLTSK. Residues 1227-1245 form a helical membrane-spanning segment; it reads ALMMTTIGIVLSSQSTTPE. Residues 1246–1269 lie on the Lumenal side of the membrane; that stretch reads TILELTDALALGMMVLKMVRNMEK. Residues 1270-1290 form a helical membrane-spanning segment; sequence YQLAVTIMAILCVPNAVILQN. A topological domain (cytoplasmic) is located at residue A1291. A helical transmembrane segment spans residues 1292 to 1310; sequence WKVSCTILAVVSVSPLFLT. The Lumenal portion of the chain corresponds to 1311–1317; that stretch reads SSQQKTD. Residues 1318 to 1338 traverse the membrane as a helical segment; it reads WIPLALTIKGLNPTAIFLTTL. The Cytoplasmic portion of the chain corresponds to 1339 to 1346; it reads SRTSKKRS. The chain crosses the membrane as a helical span at residues 1347 to 1367; sequence WPLNEAIMAVGMVSILASSLL. The Lumenal portion of the chain corresponds to 1368–1370; the sequence is KND. A helical transmembrane segment spans residues 1371–1391; that stretch reads IPMTGPLVAGGPLTVCYVLTG. Residues 1392–1447 are Cytoplasmic-facing; sequence RSADLELERAADVKWEDQAEISGSSPILSITISEDGSMSIKNEEEEQTLTILIRTG. Residues 1398–1437 form an interacts with and activates NS3 protease region; the sequence is LERAADVKWEDQAEISGSSPILSITISEDGSMSIKNEEEE. Residues 1448–1468 constitute an intramembrane region (helical); it reads LLVISGLFPVSIPITAAAWYL. Residues 1469-2147 lie on the Cytoplasmic side of the membrane; the sequence is WEVKKQRAGV…LSELPETLET (679 aa). A Peptidase S7 domain is found at 1476-1653; that stretch reads AGVLWDVPSP…EKSIEDNPEI (178 aa). Active-site charge relay system; for serine protease NS3 activity residues include H1526, D1550, and S1610. The Helicase ATP-binding domain maps to 1655–1811; the sequence is DDIFRKRRLT…QSNAPIIDEE (157 aa). The tract at residues 1659–1662 is important for RNA-binding; the sequence is RKRR. 1668–1675 contacts ATP; that stretch reads LHPGAGKT. Positions 1759 to 1762 match the DEAH box motif; the sequence is DEAH. The region spanning 1821-1988 is the Helicase C-terminal domain; sequence SGHEWVTDFK…IIPSMFEPER (168 aa). Position 1863 is an N6-acetyllysine; by host (K1863). A helical transmembrane segment spans residues 2148-2168; the sequence is LLLLTLLATVTGGILLFLMSG. The Lumenal segment spans residues 2169-2170; the sequence is RG. The segment at residues 2171-2191 is an intramembrane region (helical); it reads IGKMTLGMCCIITASILLWYA. A topological domain (lumenal) is located at residue Q2192. A helical transmembrane segment spans residues 2193–2213; it reads IQPHWIAASIILEFFLIVLLI. The Cytoplasmic segment spans residues 2214 to 2228; the sequence is PEPEKQRTPQDNQLT. Residues 2229–2249 form a helical membrane-spanning segment; that stretch reads YVVIAILTVVAATMANEMGFL. At 2250 to 2274 the chain is on the lumenal side; that stretch reads EKTKKDLGLGSIATQQPESNILDID. Residues 2275 to 2295 constitute an intramembrane region (helical); that stretch reads LRPASAWTLYAVATTFVTPML. Over 2296–2316 the chain is Lumenal; it reads RHSIENSSVNVSLTAIANQAT. 2 N-linked (GlcNAc...) asparagine; by host glycosylation sites follow: N2301 and N2305. The segment at residues 2317–2337 is an intramembrane region (helical); sequence VLMGLGKGWPLSKMDIGVPLL. At 2338-2347 the chain is on the lumenal side; that stretch reads AIGCYSQVNP. A helical transmembrane segment spans residues 2348–2368; the sequence is TTLTAALFLLVAHYAIIGPAL. Residues 2369–2413 lie on the Cytoplasmic side of the membrane; the sequence is QAKASREAQKRAAAGIMKNPTVDGITVIDLDPIPYDPKFEKQLGQ. Residues 2414–2434 traverse the membrane as a helical segment; it reads VMLLVLCVTQVLMMRTTWALC. Residues 2435-2459 are Lumenal-facing; the sequence is EVLTLATGPISTLWEGNPGRFWNTT. The N-linked (GlcNAc...) asparagine; by host glycan is linked to N2457. The chain crosses the membrane as a helical span at residues 2460 to 2480; sequence IAVSMANIFRGSYLAGAGLLF. The Cytoplasmic portion of the chain corresponds to 2481-3391; the sequence is SIMKNTTNAR…REEEEAGVLW (911 aa). One can recognise an mRNA cap 0-1 NS5-type MT domain in the interval 2493–2755; sequence TGNIGETLGE…DVDLGSGTRN (263 aa). S2547 provides a ligand contact to S-adenosyl-L-methionine. The residue at position 2547 (S2547) is a Phosphoserine. K2552 (for 2'-O-MTase activity) is an active-site residue. An SUMO-interacting motif motif is present at residues 2568 to 2571; the sequence is VVDL. G2577, W2578, T2595, K2596, D2622, and V2623 together coordinate S-adenosyl-L-methionine. Catalysis depends on D2637, which acts as the For 2'-O-MTase activity. An S-adenosyl-L-methionine-binding site is contributed by I2638. Catalysis depends on for 2'-O-MTase activity residues K2672 and E2708. Residue Y2710 participates in S-adenosyl-L-methionine binding. 4 residues coordinate Zn(2+): E2929, H2933, C2938, and C2941. Positions 3020-3169 constitute a RdRp catalytic domain; sequence AMYADDTAGW…PLDDRLPSAL (150 aa). The Zn(2+) site is built by H3203, C3219, and C3338.

The protein in the N-terminal section; belongs to the class I-like SAM-binding methyltransferase superfamily. mRNA cap 0-1 NS5-type methyltransferase family. Homodimer. Interacts (via N-terminus) with host EXOC1 (via C-terminus); this interaction results in EXOC1 degradation through the proteasome degradation pathway. In terms of assembly, forms heterodimers with envelope protein E in the endoplasmic reticulum and Golgi. As to quaternary structure, homodimer; in the endoplasmic reticulum and Golgi. Interacts with protein prM. Interacts with non-structural protein 1. Homodimer; Homohexamer when secreted. Interacts with envelope protein E. Interacts with host PRKAA1. In terms of assembly, interacts (via N-terminus) with serine protease NS3. As to quaternary structure, forms a heterodimer with serine protease NS3. May form homooligomers. Forms a heterodimer with NS2B. Interacts with NS4B. Interacts with unphosphorylated RNA-directed RNA polymerase NS5; this interaction stimulates RNA-directed RNA polymerase NS5 guanylyltransferase activity. Interacts with host SHFL. In terms of assembly, interacts with host MAVS; this interaction inhibits the synthesis of IFN-beta. Interacts with host SHFL. Interacts with host AUP1; the interaction occurs in the presence of Dengue virus NS4B and induces lipophagy which facilitates production of virus progeny particles. May interact with host SRPRA and SEC61G. As to quaternary structure, interacts with serine protease NS3. Homodimer. Interacts with host STAT2; this interaction inhibits the phosphorylation of the latter, and, when all viral proteins are present (polyprotein), targets STAT2 for degradation. Interacts with serine protease NS3. Interacts with host PAF1 complex; the interaction may prevent the recruitment of the PAF1 complex to interferon-responsive genes, and thus reduces the immune response. Specific enzymatic cleavages in vivo yield mature proteins. Cleavages in the lumen of endoplasmic reticulum are performed by host signal peptidase, whereas cleavages in the cytoplasmic side are performed by serine protease NS3. Signal cleavage at the 2K-4B site requires a prior NS3 protease-mediated cleavage at the 4A-2K site. In terms of processing, cleaved in post-Golgi vesicles by a host furin, releasing the mature small envelope protein M, and peptide pr. This cleavage is incomplete as up to 30% of viral particles still carry uncleaved prM. Post-translationally, N-glycosylated. N-glycosylated. The excreted form is glycosylated and this is required for efficient secretion of the protein from infected cells. In terms of processing, acetylated by host KAT5. Acetylation modulates NS3 RNA-binding and unwinding activities and plays an important positive role for viral replication. Post-translationally, sumoylation of RNA-directed RNA polymerase NS5 increases NS5 protein stability allowing proper viral RNA replication. Phosphorylated on serines residues. This phosphorylation may trigger NS5 nuclear localization.

It localises to the virion. The protein localises to the host nucleus. The protein resides in the host cytoplasm. It is found in the host perinuclear region. Its subcellular location is the secreted. It localises to the virion membrane. The protein localises to the host endoplasmic reticulum membrane. The protein resides in the host mitochondrion. The enzyme catalyses Selective hydrolysis of -Xaa-Xaa-|-Yaa- bonds in which each of the Xaa can be either Arg or Lys and Yaa can be either Ser or Ala.. The catalysed reaction is RNA(n) + a ribonucleoside 5'-triphosphate = RNA(n+1) + diphosphate. It catalyses the reaction a ribonucleoside 5'-triphosphate + H2O = a ribonucleoside 5'-diphosphate + phosphate + H(+). It carries out the reaction ATP + H2O = ADP + phosphate + H(+). The enzyme catalyses a 5'-end (5'-triphosphoguanosine)-ribonucleoside in mRNA + S-adenosyl-L-methionine = a 5'-end (N(7)-methyl 5'-triphosphoguanosine)-ribonucleoside in mRNA + S-adenosyl-L-homocysteine. The catalysed reaction is a 5'-end (N(7)-methyl 5'-triphosphoguanosine)-ribonucleoside in mRNA + S-adenosyl-L-methionine = a 5'-end (N(7)-methyl 5'-triphosphoguanosine)-(2'-O-methyl-ribonucleoside) in mRNA + S-adenosyl-L-homocysteine + H(+). In terms of biological role, plays a role in virus budding by binding to the cell membrane and gathering the viral RNA into a nucleocapsid that forms the core of a mature virus particle. During virus entry, may induce genome penetration into the host cytoplasm after hemifusion induced by the surface proteins. Can migrate to the cell nucleus where it modulates host functions. Overcomes the anti-viral effects of host EXOC1 by sequestering and degrading the latter through the proteasome degradation pathway. Inhibits RNA silencing by interfering with host Dicer. Functionally, prevents premature fusion activity of envelope proteins in trans-Golgi by binding to envelope protein E at pH6.0. After virion release in extracellular space, gets dissociated from E dimers. Its function is as follows. Acts as a chaperone for envelope protein E during intracellular virion assembly by masking and inactivating envelope protein E fusion peptide. prM is the only viral peptide matured by host furin in the trans-Golgi network probably to avoid catastrophic activation of the viral fusion activity in acidic Golgi compartment prior to virion release. prM-E cleavage is inefficient, and many virions are only partially matured. These uncleaved prM would play a role in immune evasion. In terms of biological role, may play a role in virus budding. Exerts cytotoxic effects by activating a mitochondrial apoptotic pathway through M ectodomain. May display a viroporin activity. Binds to host cell surface receptor and mediates fusion between viral and cellular membranes. Envelope protein is synthesized in the endoplasmic reticulum in the form of heterodimer with protein prM. They play a role in virion budding in the ER, and the newly formed immature particle is covered with 60 spikes composed of heterodimer between precursor prM and envelope protein E. The virion is transported to the Golgi apparatus where the low pH causes dissociation of PrM-E heterodimers and formation of E homodimers. prM-E cleavage is inefficient, and many virions are only partially matured. These uncleaved prM would play a role in immune evasion. Functionally, involved in immune evasion, pathogenesis and viral replication. Once cleaved off the polyprotein, is targeted to three destinations: the viral replication cycle, the plasma membrane and the extracellular compartment. Essential for viral replication. Required for formation of the replication complex and recruitment of other non-structural proteins to the ER-derived membrane structures. Excreted as a hexameric lipoparticle that plays a role against host immune response. Antagonizing the complement function. Binds to the host macrophages and dendritic cells. Inhibits signal transduction originating from Toll-like receptor 3 (TLR3). Its function is as follows. Involved in immune evasion, pathogenesis and viral replication. Once cleaved off the polyprotein, is targeted to three destinations: the viral replication cycle, the plasma membrane and the extracellular compartment. Essential for viral replication. Required for formation of the replication complex and recruitment of other non-structural proteins to the ER-derived membrane structures. Excreted as a hexameric lipoparticle that plays a role against host immune response. Antagonizing the complement function. Binds to the host macrophages and dendritic cells. Inhibits signal transduction originating from Toll-like receptor 3 (TLR3). Mediates complement activation, which may contribute to the pathogenesis of the vascular leakage that occurs in severe dengue disease. Activates autophagy through the AMPK/ERK/mTOR signaling pathway. Mechanistically, acts as the assembly platform for STK11-AMPK interactions and promotes STK11-AMPK interactions. In turn, promotes phosphorylation of the AMPK kinase structural domain and activates AMPK, thereby positively regulating the AMPK/ERK/mTOR signaling pathway and inducing autophagy. In terms of biological role, component of the viral RNA replication complex that functions in virion assembly and antagonizes the host immune response. Required cofactor for the serine protease function of NS3. May have membrane-destabilizing activity and form viroporins. Functionally, displays three enzymatic activities: serine protease, NTPase and RNA helicase. NS3 serine protease, in association with NS2B, performs its autocleavage and cleaves the polyprotein at dibasic sites in the cytoplasm: C-prM, NS2A-NS2B, NS2B-NS3, NS3-NS4A, NS4A-2K and NS4B-NS5. NS3 RNA helicase binds RNA and unwinds dsRNA in the 3' to 5' direction. Its function is as follows. Regulates the ATPase activity of the NS3 helicase activity. NS4A allows NS3 helicase to conserve energy during unwinding. Plays a role in the inhibition of the host innate immune response. Interacts with host MAVS and thereby prevents the interaction between RIGI and MAVS. In turn, IFN-beta production is impaired. Interacts with host AUP1 which mediates induction of lipophagy in host cells and facilitates production of virus progeny particles. In terms of biological role, functions as a signal peptide for NS4B and is required for the interferon antagonism activity of the latter. Induces the formation of ER-derived membrane vesicles where the viral replication takes place. Inhibits interferon (IFN)-induced host STAT1 phosphorylation and nuclear translocation, thereby preventing the establishment of cellular antiviral state by blocking the IFN-alpha/beta pathway. Functionally, replicates the viral (+) and (-) RNA genome, and performs the capping of genomes in the cytoplasm. NS5 methylates viral RNA cap at guanine N-7 and ribose 2'-O positions. Besides its role in RNA genome replication, also prevents the establishment of cellular antiviral state by blocking the interferon-alpha/beta (IFN-alpha/beta) signaling pathway. Inhibits host TYK2 and STAT2 phosphorylation, thereby preventing activation of JAK-STAT signaling pathway. May reduce immune responses by preventing the recruitment of the host PAF1 complex to interferon-responsive genes. This is Genome polyprotein from Aedes aegypti (Yellowfever mosquito).